Reading from the N-terminus, the 43-residue chain is uncharacterized protein (43 aa).

The tract at residues 1–43 is disordered; that stretch reads MFKSRIETGGFQFQVHGDDESAMDDEFIDDDDDQQVVEPVTDN. Positions 20-35 are enriched in acidic residues; the sequence is ESAMDDEFIDDDDDQQ.

This is an uncharacterized protein from Dictyostelium discoideum (Social amoeba).